Here is a 163-residue protein sequence, read N- to C-terminus: Ubiquitin-like protein 1-ribosomal protein eS31 fusion protein (163 aa).

The Ubiquitin-like domain maps to 1-70 (MVFVKTLHRT…IYVNLELLGG (70 aa)). A Glycyl lysine isopeptide (Gly-Lys) (interchain with K-? in acceptor proteins) cross-link involves residue G70. The C4-type zinc finger occupies 115–138 (CQQPSCGGGVFMAQHANRHYCGRC).

In the N-terminal section; belongs to the ubiquitin family. This sequence in the C-terminal section; belongs to the eukaryotic ribosomal protein eS31 family.

In Caenorhabditis elegans, this protein is Ubiquitin-like protein 1-ribosomal protein eS31 fusion protein.